The sequence spans 129 residues: Fluoride-specific ion channel FluC (129 aa).

Helical transmembrane passes span 1–21 (MLMKQVSAFLLVGIGGFLGSA), 35–55 (GGLPLATFSVNIIGCFFIGFI), 71–91 (LFLVTGFCGGFTTFSSYIFEN), and 105–125 (AYLAGSVIGGFVALYSGTFFA). Glycine 79 and threonine 82 together coordinate Na(+).

Belongs to the fluoride channel Fluc/FEX (TC 1.A.43) family.

The protein localises to the cell inner membrane. The enzyme catalyses fluoride(in) = fluoride(out). With respect to regulation, na(+) is not transported, but it plays an essential structural role and its presence is essential for fluoride channel function. Its function is as follows. Fluoride-specific ion channel. Important for reducing fluoride concentration in the cell, thus reducing its toxicity. This chain is Fluoride-specific ion channel FluC, found in Chlorobium phaeobacteroides (strain DSM 266 / SMG 266 / 2430).